Consider the following 142-residue polypeptide: MATYMANAKTVSPRWLLVNAEGKTLGRLASRIAAILRGKHKAEFTPHVDAGDFVVVINVDKLKITGNKTQDKQYHHHSGYPGGLKTINFADLQAKKPQRILELAIKGMLPKGPLGRQLYRKLKIYAGDQHPHQAQQPELIDL.

This sequence belongs to the universal ribosomal protein uL13 family. As to quaternary structure, part of the 50S ribosomal subunit.

Its function is as follows. This protein is one of the early assembly proteins of the 50S ribosomal subunit, although it is not seen to bind rRNA by itself. It is important during the early stages of 50S assembly. This is Large ribosomal subunit protein uL13 from Coxiella burnetii (strain CbuG_Q212) (Coxiella burnetii (strain Q212)).